Reading from the N-terminus, the 274-residue chain is Large ribosomal subunit protein uL2 (274 aa).

Residues 223–274 (VVMNPVDHPHGGGEGRTSGGRHPVSPWGVPTKGYKTRSNKRTDKYIVRRRNK) are disordered.

This sequence belongs to the universal ribosomal protein uL2 family. Part of the 50S ribosomal subunit. Forms a bridge to the 30S subunit in the 70S ribosome.

In terms of biological role, one of the primary rRNA binding proteins. Required for association of the 30S and 50S subunits to form the 70S ribosome, for tRNA binding and peptide bond formation. It has been suggested to have peptidyltransferase activity; this is somewhat controversial. Makes several contacts with the 16S rRNA in the 70S ribosome. The chain is Large ribosomal subunit protein uL2 from Vibrio cholerae serotype O1 (strain M66-2).